The sequence spans 45 residues: uncharacterized protein (45 aa).

Residues 1-19 (MTFQILFLFVFHFVYIFRA) form the signal peptide.

This is an uncharacterized protein from Saccharomyces cerevisiae (strain ATCC 204508 / S288c) (Baker's yeast).